A 172-amino-acid polypeptide reads, in one-letter code: Translocator protein 2 (172 aa).

The next 5 helical transmembrane spans lie at 3 to 23, 45 to 65, 80 to 100, 104 to 124, and 130 to 150; these read PQGAIFVALPHLGPILVSLLT, VLLAGWITIYFVMGYASYLVW, LGLYAVQLAVSWAVLIFFFAA, GLALLHMLLLYGLVVSTALIW, and LAAVLLLPYLAWLTVTASIAY.

Belongs to the TspO/BZRP family. As to quaternary structure, homotetramer. May also form homodimer. As to expression, expressed in erythrocytes (at protein level).

It is found in the endoplasmic reticulum membrane. The protein resides in the cell membrane. Its function is as follows. Cholesterol-binding protein involved in the redistribution of cholesterol from lipid droplets to the endoplasmic reticulum. Required to meet cholesterol demands during erythropoietic differentiation. May play a role in transport processes at the plasma membrane of erythrocytes, including regulating VDAC-mediated ATP export, and import of the heme precursors protoporphyrin IX and 5-aminolevulinic acid. The chain is Translocator protein 2 from Canis lupus familiaris (Dog).